The following is a 447-amino-acid chain: MTKQIITLVGRPNVGKSTLFNRLSIRKKAIVHDLPGVTRDRKYTDGKIGSFEFLLIDTPGLDEHPNSMGKRLIEQTTKAILEADLICFMVDARSGILPDDKLLSSFVRKYNKPAILVVNKCEKAFDFDKEYYKLGFDSMIAISAEHGTGLIDLYDEIIAKLPEEESIETNIADPIKGDCLQIVVSGRPNAGKSTFINALINDERLLTGPEAGITRESIEIDWQYKNNHIKLIDTAGLRKKSTITESLEKLSASDTINSIKLANTVILMIDALAPLKQQDLNIASHVVNEGRSIVIVVNKWDLVKESEKEAFQEEFYYQINTHLPQVKGIPVLFISAINKQNIEQVLDACLKIYKIWNKKITTSKLNEWLNFTTEAHLLPLQKGGRRVRVKYMTQTKTRPPTFKLFSNNPEKITDSYTRYLVNNMREAFDMPGVPIRFTYVKTKNPYV.

2 consecutive EngA-type G domains span residues 4 to 165 (QIIT…PEEE) and 180 to 357 (LQIV…KIWN). GTP contacts are provided by residues 10-17 (GRPNVGKS), 57-61 (DTPGL), 119-122 (NKCE), 186-193 (GRPNAGKS), 233-237 (DTAGL), and 298-301 (NKWD). The 86-residue stretch at 358–443 (KKITTSKLNE…PIRFTYVKTK (86 aa)) folds into the KH-like domain.

It belongs to the TRAFAC class TrmE-Era-EngA-EngB-Septin-like GTPase superfamily. EngA (Der) GTPase family. Associates with the 50S ribosomal subunit.

Its function is as follows. GTPase that plays an essential role in the late steps of ribosome biogenesis. The sequence is that of GTPase Der from Rickettsia rickettsii (strain Sheila Smith).